A 55-amino-acid chain; its full sequence is Large ribosomal subunit protein bL33 (55 aa).

It belongs to the bacterial ribosomal protein bL33 family.

This Buchnera aphidicola subsp. Baizongia pistaciae (strain Bp) protein is Large ribosomal subunit protein bL33.